Consider the following 104-residue polypeptide: Large ribosomal subunit protein uL24 (104 aa).

This sequence belongs to the universal ribosomal protein uL24 family. In terms of assembly, part of the 50S ribosomal subunit.

One of two assembly initiator proteins, it binds directly to the 5'-end of the 23S rRNA, where it nucleates assembly of the 50S subunit. Functionally, one of the proteins that surrounds the polypeptide exit tunnel on the outside of the subunit. The sequence is that of Large ribosomal subunit protein uL24 from Pseudomonas syringae pv. syringae (strain B728a).